Here is a 346-residue protein sequence, read N- to C-terminus: Glucose-6-phosphatase 3 (346 aa).

Residues 1-24 are Lumenal-facing; it reads MESTLSAGIIMAEALQNRLPGLEN. A helical transmembrane segment spans residues 25–45; that stretch reads MWLWVTFLGDPKNLFQFCFPA. Over 46–56 the chain is Cytoplasmic; that stretch reads AYYASRRLGIS. Residues 57-77 form a helical membrane-spanning segment; it reads VLWITFIAEWLNLVFKWFLFG. The Lumenal portion of the chain corresponds to 78-108; the sequence is DRPFWWVHESGYSTQTPIQIHQFPSSCETGP. Substrate is bound at residue Arg79. The helical transmembrane segment at 109–129 threads the bilayer; the sequence is GSPSGHCMITGAALWPVMTAI. Residue His114 is the Proton donor of the active site. The Cytoplasmic segment spans residues 130–138; that stretch reads SSQVASRSR. A helical membrane pass occupies residues 139-159; that stretch reads SPWVRVIPGLAYCTFLLAVGL. The Lumenal portion of the chain corresponds to 160 to 167; that stretch reads SRVFLLAH. Arg161 provides a ligand contact to substrate. His167 (nucleophile) is an active-site residue. The helical transmembrane segment at 168-186 threads the bilayer; it reads FPHQVLGGLIVGAALGWLM. Over 187-197 the chain is Cytoplasmic; it reads SPRVPMERELS. The chain crosses the membrane as a helical span at residues 198 to 218; that stretch reads FYGLTALALMLGASLMYWTLF. Over 219 to 254 the chain is Lumenal; the sequence is TLGLDLSWSINLASKWCERPEWVHMDSRPFASLSRD. Residues 255 to 273 traverse the membrane as a helical segment; sequence SGSALGLGIALHTPCYAQI. Residues 274-283 lie on the Cytoplasmic side of the membrane; sequence RRAHLGNGQK. Residues 284–304 traverse the membrane as a helical segment; the sequence is IACFVLAMGLLVFLEWLGYPP. Over 305 to 307 the chain is Lumenal; the sequence is QIS. A helical transmembrane segment spans residues 308-328; the sequence is LFYIFNFLKYTLWPCLVLALV. Over 329–346 the chain is Cytoplasmic; sequence PWVVHTLSDQEAPPIRSS.

The protein belongs to the glucose-6-phosphatase family. As to expression, widely expressed. Highly expressed in heart and testis and to a lower extent in spleen, stomach, small intestine, skeletal muscle and uterus. Expressed in muscle, brain, thymus, lung, kidney, spleen and pancreas (at protein level). In the brain, expressed in astrocytes (at protein level).

It is found in the endoplasmic reticulum membrane. The catalysed reaction is D-glucose 6-phosphate + H2O = D-glucose + phosphate. Its pathway is carbohydrate biosynthesis; gluconeogenesis. With respect to regulation, inhibited by vanadate. Hydrolyzes glucose-6-phosphate to glucose in the endoplasmic reticulum. May form with the glucose-6-phosphate transporter (SLC37A4/G6PT) a ubiquitously expressed complex responsible for glucose production through glycogenolysis and gluconeogenesis. Probably required for normal neutrophil function. In Mus musculus (Mouse), this protein is Glucose-6-phosphatase 3 (G6pc3).